The chain runs to 225 residues: MRNRIRLALIPVAVAAIALAGCSKTDKADPNLPEAATLLSESAATTKTQTSTHIVLKVTGDKPTLKLSDLTGDLTTKPAVAAKGTAKTGGLELPFVVVDGELFAQLGSAYSSMGPVKDVYDVGLILDPNKGLANLLANITGAKSEKTETIDGVDSVLVTGTMSKDALNTFTGGTTLTADIPAKAWIQKDGNHALTKISVDTSPGNTIEMSLSDWGKPVTVDKPAQ.

An N-terminal signal peptide occupies residues Met1–Gly21. Cys22 carries the N-palmitoyl cysteine lipid modification. A lipid anchor (S-diacylglycerol cysteine) is attached at Cys22.

Belongs to the LppX/LprAFG lipoprotein family. Modified by Lgt on Cys-22 with an S-linked diacylglyceral, signal peptide is removed by LspA, Cys-22 is further modifed with a fatty acid on its amino group by Lnt yielding a triacylated protein.

It is found in the cell inner membrane. Functionally, helps membrane protein MAB_2807 (P55) transport triacylglycerides (TAG) across the inner cell membrane into the periplasm and probably ultimately to the outer membrane. Binds TAG in its hydrophobic cavity and transfers it between lipid bilayers. TAG probably regulates lipid metabolism and growth regulation and plays a structural role in the outer membrane. Also binds mannosides, lipoarabinomannan and lipomannan and various glycolipids in the same cavity. The protein is Lipoarabinomannan carrier protein LprG of Mycobacteroides abscessus (strain ATCC 19977 / DSM 44196 / CCUG 20993 / CIP 104536 / JCM 13569 / NCTC 13031 / TMC 1543 / L948) (Mycobacterium abscessus).